A 370-amino-acid polypeptide reads, in one-letter code: Queuine tRNA-ribosyltransferase (370 aa).

D89 functions as the Proton acceptor in the catalytic mechanism. Substrate-binding positions include 89–93 (DSGGF), D143, Q187, and G214. The tract at residues 245–251 (GVGTPED) is RNA binding. The active-site Nucleophile is the D264. The tract at residues 269–273 (TRNAR) is RNA binding; important for wobble base 34 recognition. The Zn(2+) site is built by C302, C304, C307, and H333.

It belongs to the queuine tRNA-ribosyltransferase family. As to quaternary structure, homodimer. Within each dimer, one monomer is responsible for RNA recognition and catalysis, while the other monomer binds to the replacement base PreQ1. It depends on Zn(2+) as a cofactor.

It catalyses the reaction 7-aminomethyl-7-carbaguanine + guanosine(34) in tRNA = 7-aminomethyl-7-carbaguanosine(34) in tRNA + guanine. The protein operates within tRNA modification; tRNA-queuosine biosynthesis. Functionally, catalyzes the base-exchange of a guanine (G) residue with the queuine precursor 7-aminomethyl-7-deazaguanine (PreQ1) at position 34 (anticodon wobble position) in tRNAs with GU(N) anticodons (tRNA-Asp, -Asn, -His and -Tyr). Catalysis occurs through a double-displacement mechanism. The nucleophile active site attacks the C1' of nucleotide 34 to detach the guanine base from the RNA, forming a covalent enzyme-RNA intermediate. The proton acceptor active site deprotonates the incoming PreQ1, allowing a nucleophilic attack on the C1' of the ribose to form the product. After dissociation, two additional enzymatic reactions on the tRNA convert PreQ1 to queuine (Q), resulting in the hypermodified nucleoside queuosine (7-(((4,5-cis-dihydroxy-2-cyclopenten-1-yl)amino)methyl)-7-deazaguanosine). The sequence is that of Queuine tRNA-ribosyltransferase from Azoarcus sp. (strain BH72).